Reading from the N-terminus, the 388-residue chain is Protein RecA (388 aa).

An ATP-binding site is contributed by 79–86 (GPESSGKT). Positions 347-372 (IDGEEVSEQDTENKKDEPKKEEAVNE) are disordered. Over residues 357 to 369 (TENKKDEPKKEEA) the composition is skewed to basic and acidic residues.

Belongs to the RecA family.

Its subcellular location is the cytoplasm. Functionally, can catalyze the hydrolysis of ATP in the presence of single-stranded DNA, the ATP-dependent uptake of single-stranded DNA by duplex DNA, and the ATP-dependent hybridization of homologous single-stranded DNAs. It interacts with LexA causing its activation and leading to its autocatalytic cleavage. This chain is Protein RecA, found in Streptococcus pneumoniae (strain CGSP14).